The chain runs to 376 residues: 2-oxoglutarate synthase subunit KorA (376 aa).

Heterotetramer of the KorA, KorB, KorC and KorD subunits.

The catalysed reaction is 2 oxidized [2Fe-2S]-[ferredoxin] + 2-oxoglutarate + CoA = succinyl-CoA + 2 reduced [2Fe-2S]-[ferredoxin] + CO2 + H(+). The sequence is that of 2-oxoglutarate synthase subunit KorA (korA) from Methanothermobacter thermautotrophicus (strain ATCC 29096 / DSM 1053 / JCM 10044 / NBRC 100330 / Delta H) (Methanobacterium thermoautotrophicum).